The primary structure comprises 733 residues: Neutral ceramidase 3 (733 aa).

The first 25 residues, 1–25, serve as a signal peptide directing secretion; sequence MTRWSMSMHCTLFLLFLLRLTCIFS. The active-site Nucleophile is the serine 307. Asparagine 325 carries N-linked (GlcNAc...) asparagine glycosylation.

This sequence belongs to the neutral ceramidase family.

Its subcellular location is the secreted. It is found in the endoplasmic reticulum. The protein localises to the golgi apparatus. The enzyme catalyses an N-acylsphing-4-enine + H2O = sphing-4-enine + a fatty acid. Functionally, hydrolyzes the sphingolipid ceramide into sphingosine and free fatty acid. Promotes oxidative stress resistance. The polypeptide is Neutral ceramidase 3 (Arabidopsis thaliana (Mouse-ear cress)).